The sequence spans 200 residues: Probable UbiX-like flavin prenyltransferase (200 aa).

FMN is bound by residues 9–11, Ser-36, 87–90, and Arg-122; these read GAT and SMKT.

It belongs to the UbiX/PAD1 family. YclB subfamily. As to quaternary structure, homododecamer.

The catalysed reaction is dimethylallyl phosphate + FMNH2 = prenylated FMNH2 + phosphate. Its function is as follows. Involved in the non-oxidative decarboxylation and detoxification of phenolic derivatives under both aerobic and anaerobic conditions. Flavin prenyltransferase that catalyzes the synthesis of the prenylated FMN cofactor (prenyl-FMN) for phenolic acid decarboxylase. In Streptomyces sp. (strain D7), this protein is Probable UbiX-like flavin prenyltransferase.